We begin with the raw amino-acid sequence, 395 residues long: uncharacterized protein (395 aa).

Disordered regions lie at residues 17 to 155 (EVKK…QVKT) and 276 to 304 (EERE…HEQK). Polar residues-rich tracts occupy residues 42-71 (DGNN…SNVV) and 81-96 (GDAS…NVVK). Residues 103–133 (VAEKPEKEDLAVIESEDKAAKPDGEIKKNVE) show a composition bias toward basic and acidic residues. The span at 134–143 (TEVTSRSTSS) shows a compositional bias: low complexity. Composition is skewed to basic and acidic residues over residues 144-155 (QEKDELEKQVKT) and 276-290 (EERE…KEQS). Residues 224-351 (LKMNGKEDDL…QRRLKELEAM (128 aa)) are a coiled coil. Polar residues predominate over residues 291 to 300 (SEGSKTANQT).

The protein localises to the cytoplasm. This is an uncharacterized protein from Schizosaccharomyces pombe (strain 972 / ATCC 24843) (Fission yeast).